We begin with the raw amino-acid sequence, 481 residues long: 3-isopropylmalate dehydratase large subunit (481 aa).

[4Fe-4S] cluster is bound by residues cysteine 363, cysteine 423, and cysteine 426. Positions glycine 437 to proline 463 are disordered.

The protein belongs to the aconitase/IPM isomerase family. LeuC type 1 subfamily. Heterodimer of LeuC and LeuD. The cofactor is [4Fe-4S] cluster.

The catalysed reaction is (2R,3S)-3-isopropylmalate = (2S)-2-isopropylmalate. Its pathway is amino-acid biosynthesis; L-leucine biosynthesis; L-leucine from 3-methyl-2-oxobutanoate: step 2/4. Its function is as follows. Catalyzes the isomerization between 2-isopropylmalate and 3-isopropylmalate, via the formation of 2-isopropylmaleate. This is 3-isopropylmalate dehydratase large subunit from Salinispora arenicola (strain CNS-205).